The sequence spans 398 residues: Bifunctional enzyme IspD/IspF (398 aa).

The 2-C-methyl-D-erythritol 4-phosphate cytidylyltransferase stretch occupies residues 1-234 (MAKSQRTAVV…ARLAAQLGDI (234 aa)). The interval 235-398 (RTGTGYDVHA…LPFNEKTWSV (164 aa)) is 2-C-methyl-D-erythritol 2,4-cyclodiphosphate synthase. A divalent metal cation-binding residues include D241 and H243. 4-CDP-2-C-methyl-D-erythritol 2-phosphate-binding positions include 241–243 (DVH) and 267–268 (HS). H275 provides a ligand contact to a divalent metal cation. Residues 289 to 291 (DIG), 365 to 368 (TTSE), F372, and R375 each bind 4-CDP-2-C-methyl-D-erythritol 2-phosphate.

The protein in the N-terminal section; belongs to the IspD/TarI cytidylyltransferase family. IspD subfamily. This sequence in the C-terminal section; belongs to the IspF family. A divalent metal cation is required as a cofactor.

The catalysed reaction is 2-C-methyl-D-erythritol 4-phosphate + CTP + H(+) = 4-CDP-2-C-methyl-D-erythritol + diphosphate. It catalyses the reaction 4-CDP-2-C-methyl-D-erythritol 2-phosphate = 2-C-methyl-D-erythritol 2,4-cyclic diphosphate + CMP. It functions in the pathway isoprenoid biosynthesis; isopentenyl diphosphate biosynthesis via DXP pathway; isopentenyl diphosphate from 1-deoxy-D-xylulose 5-phosphate: step 2/6. Its pathway is isoprenoid biosynthesis; isopentenyl diphosphate biosynthesis via DXP pathway; isopentenyl diphosphate from 1-deoxy-D-xylulose 5-phosphate: step 4/6. Functionally, bifunctional enzyme that catalyzes the formation of 4-diphosphocytidyl-2-C-methyl-D-erythritol from CTP and 2-C-methyl-D-erythritol 4-phosphate (MEP) (IspD), and catalyzes the conversion of 4-diphosphocytidyl-2-C-methyl-D-erythritol 2-phosphate (CDP-ME2P) to 2-C-methyl-D-erythritol 2,4-cyclodiphosphate (ME-CPP) with a corresponding release of cytidine 5-monophosphate (CMP) (IspF). This is Bifunctional enzyme IspD/IspF from Bradyrhizobium diazoefficiens (strain JCM 10833 / BCRC 13528 / IAM 13628 / NBRC 14792 / USDA 110).